We begin with the raw amino-acid sequence, 304 residues long: WW domain-binding protein 1 (304 aa).

Residues 1 to 26 (MARASSRNSSEEAWGSLQAPQQQQSP) form a disordered region. 2 short sequence motifs (PPxY motif) span residues 159 to 162 (PPAY) and 172 to 176 (PPPPY). Disordered regions lie at residues 206–235 (TNVE…VHIP) and 252–304 (CPCP…GDIP). Polar residues predominate over residues 209–218 (EGVSSQQSAL).

Binds to the WW domain of YAP1, WWP1 and WWP2. Interacts with WWOX. Interacts with NEDD4.

The sequence is that of WW domain-binding protein 1 (Wbp1) from Mus musculus (Mouse).